The chain runs to 360 residues: Peptide chain release factor 1 (360 aa).

Glutamine 235 carries the post-translational modification N5-methylglutamine. Residues 285-295 show a composition bias toward basic and acidic residues; the sequence is RQAAEQTDMRR. Residues 285–309 are disordered; the sequence is RQAAEQTDMRRNLLGSGDRSDKIRT.

Belongs to the prokaryotic/mitochondrial release factor family. Post-translationally, methylated by PrmC. Methylation increases the termination efficiency of RF1.

It is found in the cytoplasm. In terms of biological role, peptide chain release factor 1 directs the termination of translation in response to the peptide chain termination codons UAG and UAA. This Haemophilus influenzae (strain ATCC 51907 / DSM 11121 / KW20 / Rd) protein is Peptide chain release factor 1 (prfA).